A 484-amino-acid chain; its full sequence is Protein nucleotidyltransferase YdiU (484 aa).

Positions 87, 89, 90, 110, 122, 123, 173, and 180 each coordinate ATP. Residue D249 is the Proton acceptor of the active site. Positions 250 and 259 each coordinate Mg(2+). Position 259 (D259) interacts with ATP.

This sequence belongs to the SELO family. Mg(2+) serves as cofactor. It depends on Mn(2+) as a cofactor.

It catalyses the reaction L-seryl-[protein] + ATP = 3-O-(5'-adenylyl)-L-seryl-[protein] + diphosphate. The catalysed reaction is L-threonyl-[protein] + ATP = 3-O-(5'-adenylyl)-L-threonyl-[protein] + diphosphate. The enzyme catalyses L-tyrosyl-[protein] + ATP = O-(5'-adenylyl)-L-tyrosyl-[protein] + diphosphate. It carries out the reaction L-histidyl-[protein] + UTP = N(tele)-(5'-uridylyl)-L-histidyl-[protein] + diphosphate. It catalyses the reaction L-seryl-[protein] + UTP = O-(5'-uridylyl)-L-seryl-[protein] + diphosphate. The catalysed reaction is L-tyrosyl-[protein] + UTP = O-(5'-uridylyl)-L-tyrosyl-[protein] + diphosphate. Its function is as follows. Nucleotidyltransferase involved in the post-translational modification of proteins. It can catalyze the addition of adenosine monophosphate (AMP) or uridine monophosphate (UMP) to a protein, resulting in modifications known as AMPylation and UMPylation. In Lachnoclostridium phytofermentans (strain ATCC 700394 / DSM 18823 / ISDg) (Clostridium phytofermentans), this protein is Protein nucleotidyltransferase YdiU.